The chain runs to 434 residues: Transcription elongation factor B polypeptide 3 (434 aa).

The segment at 142 to 161 (KPEPVDVHEQQASSSSMSYQ) is disordered. Residues 151–160 (QQASSSSMSY) are compositionally biased toward polar residues. Residues 221 to 230 (TLVSLCQTVL) form a BC box region. The 45-residue stretch at 237-281 (IDHVGIVPFDLLKPVLDHASTDQLRHILDVNPMLVEDADEMFHEM) folds into the F-box domain. Residues 391–415 (ITPRGGGVPSTSRSRSNNNNNMNNG) form a disordered region.

Heterotrimer of an A, B and C subunit.

Its subcellular location is the nucleus. In terms of biological role, SIII, also known as elongin, is a general transcription elongation factor that increases the RNA polymerase II transcription elongation past template-encoded arresting sites. Subunit A is transcriptionally active and its transcription activity is strongly enhanced by binding to the dimeric complex of the SIII regulatory subunits B and C (elongin BC complex). This chain is Transcription elongation factor B polypeptide 3, found in Caenorhabditis elegans.